The sequence spans 777 residues: Nuclear autoantigenic sperm protein (777 aa).

Ala-2 carries the N-acetylalanine modification. The residue at position 34 (Lys-34) is an N6-acetyllysine. One copy of the TPR 1 repeat lies at 44 to 77 (AKKLLGLGQKHLVMGDIPAAVNAFQEAASLLGKK). The tract at residues 117-128 (EEEEGEKTEEES) is histone-binding. Thr-124 bears the Phosphothreonine mark. The residue at position 128 (Ser-128) is a Phosphoserine. Basic and acidic residues-rich tracts occupy residues 152-186 (MGEKEAQKTEDKSLVKPEMDKEQETEMEKGGREDM), 227-259 (VTSKKPDQEIPGAEEGKSVSETDVQEECREKGG), and 267-276 (IEEKPKEASK). The tract at residues 152–496 (MGEKEAQKTE…ALENKSLQEN (345 aa)) is disordered. The interval 211–244 (EEGKGAAAPEGLSEAEVTSKKPDQEIPGAEEGKS) is histone-binding. At Lys-243 the chain carries N6-acetyllysine. Phosphoserine is present on Ser-244. Residue Lys-285 is modified to N6-acetyllysine. Over residues 303 to 319 (DEPKEQVAASESERGKA) the composition is skewed to basic and acidic residues. Ser-312 is subject to Phosphoserine. Low complexity predominate over residues 342 to 353 (AADASAAEAGSE). Ser-399, Ser-411, and Ser-440 each carry phosphoserine. Residues 458–501 (EQMKEGEETEGSEEEDKENDKAEETLNDSALENKSLQENEEEEI) form a histone-binding region. A compositionally biased stretch (acidic residues) spans 464-474 (EETEGSEEEDK). Thr-466 is modified (phosphothreonine). Ser-469, Ser-486, and Ser-492 each carry phosphoserine. The span at 484–493 (NDSALENKSL) shows a compositional bias: polar residues. 2 TPR repeats span residues 531 to 564 (AQAHLKLGEVSVESENYLQAVEEFQACLNLQEQY) and 573 to 606 (AETHYQLGLAYGYNSQYDEAVAQFSKSIEVIEKR). Residues 593–648 (VAQFSKSIEVIEKRMAVLNEQMKEAEGSPTEYEKEIEELKELLPEIREKIEDAKES) are a coiled coil. A Phosphoserine modification is found at Ser-651. Low complexity predominate over residues 667–681 (STSGFTPSGGSSSVS). Residues 667–777 (STSGFTPSGG…AGATVESTAC (111 aa)) are disordered. A Phosphothreonine modification is found at Thr-672. Ser-694 and Ser-695 each carry phosphoserine. Residues 705 to 711 (VRKKRKP) carry the Nuclear localization signal motif. The span at 710-728 (KPEEESPRKDDAKKAKQEP) shows a compositional bias: basic and acidic residues. Phosphoserine is present on Ser-715. Lys-725 is covalently cross-linked (Glycyl lysine isopeptide (Lys-Gly) (interchain with G-Cter in SUMO1)). Residue Ser-734 is modified to Phosphoserine.

It belongs to the NASP family. In terms of assembly, binds to linker H1 histones. Interacts with histones H2A, H2B, H3 and H4. Interacts with histone H3.3. Interacts with histones H3 and H4; NASP is a histone chaperone that stabilizes and maintains a soluble pool of histone H3-H4 dimers. Interacts with ASF1A and ASF1B; the interaction is probably indirect and mediated by H3-H4. Also binds to HSP90 in the cytoplasm. This interaction stimulates binding of NASP to H1-6/H1T.

It localises to the cytoplasm. Its subcellular location is the nucleus. Functionally, component of the histone chaperone network. Binds and stabilizes histone H3-H4 not bound to chromatin to maintain a soluble reservoir and modulate degradation by chaperone-mediated autophagy. Required for DNA replication, normal cell cycle progression and cell proliferation. Forms a cytoplasmic complex with HSP90 and H1 linker histones and stimulates HSP90 ATPase activity. NASP and H1 histone are subsequently released from the complex and translocate to the nucleus where the histone is released for binding to DNA. In Bos taurus (Bovine), this protein is Nuclear autoantigenic sperm protein.